Consider the following 34-residue polypeptide: Corticostatin-2 (34 aa).

3 disulfide bridges follow: Cys3–Cys32, Cys5–Cys21, and Cys11–Cys31.

Belongs to the alpha-defensin family.

The protein resides in the secreted. Its function is as follows. Microbicidal activity and inhibits corticotropin (ACTH) stimulated corticosterone production. The protein is Corticostatin-2 of Oryctolagus cuniculus (Rabbit).